A 145-amino-acid chain; its full sequence is Large-conductance mechanosensitive channel (145 aa).

The next 2 helical transmembrane spans lie at 16 to 36 (VVDL…VTSF) and 83 to 103 (GVFI…FMVI).

It belongs to the MscL family. As to quaternary structure, homopentamer.

It localises to the cell inner membrane. Its function is as follows. Channel that opens in response to stretch forces in the membrane lipid bilayer. May participate in the regulation of osmotic pressure changes within the cell. The chain is Large-conductance mechanosensitive channel from Geobacter metallireducens (strain ATCC 53774 / DSM 7210 / GS-15).